The primary structure comprises 97 residues: Putative CC-type chemokine U83 (97 aa).

2 disulfide bridges follow: Cys-32–Cys-62 and Cys-33–Cys-76.

The protein belongs to the intercrine beta (chemokine CC) family. Highly divergent.

This chain is Putative CC-type chemokine U83 (U83), found in Human herpesvirus 6A (strain Uganda-1102) (HHV-6 variant A).